Here is a 292-residue protein sequence, read N- to C-terminus: MAVDPRVLQQEAEKTLASASKGWGLFGNKEDKYQNAADQYIQAANAFRLQKSNTEAGKCFEEAAKIFTEKLKEPNDAANAMLDAFKVYRKDAPDNAVRCVEVAIKQYTMAGNFRRAASHKENQAEVYENELQNKPEAIKAYTTAAEWYENDGAVALANKLWLKVADLSALAGDFFAAIEKFEKVAEASLGNNLMRYSVKEYFLKAGLCSLATKDMVTAQRNITKYAEKDPSFTGQREYQLLVDLLEAASNNNLEMFQDKLAAYDKMSRLDDWKAAVLLQIKNNFEEADNEFS.

The protein belongs to the SNAP family.

The protein localises to the membrane. In terms of biological role, required for vesicular transport between the endoplasmic reticulum and the Golgi apparatus. The sequence is that of Probable vesicular-fusion protein sec17 homolog from Neurospora crassa (strain ATCC 24698 / 74-OR23-1A / CBS 708.71 / DSM 1257 / FGSC 987).